Consider the following 333-residue polypeptide: Atrochrysone carboxyl ACP thioesterase MYCFIDRAFT_190111 (333 aa).

4 residues coordinate Zn(2+): His108, His110, Asp112, and His113. Asp112 acts as the Proton donor/acceptor in catalysis.

This sequence belongs to the metallo-beta-lactamase superfamily. Zn(2+) is required as a cofactor.

The enzyme catalyses atrochrysone carboxyl-[ACP] + H2O = atrochrysone carboxylate + holo-[ACP] + H(+). Its pathway is secondary metabolite biosynthesis. Functionally, atrochrysone carboxyl ACP thioesterase; part of the gene cluster that mediates the biosynthesis of an emodin derivative that may be involved in black Sigatoka disease of banana. The pathway begins with the synthesis of atrochrysone thioester by the polyketide synthase PKS8-1. The atrochrysone carboxyl ACP thioesterase MYCFIDRAFT_190111 then breaks the thioester bond and releases the atrochrysone carboxylic acid from PKS8-1. The decarboxylase MYCFIDRAFT_34057 then catalyzes the concerted decarboxylation-elimination required to convert atochrysone carboxylic acid into emodin anthrone, which is further oxidized to emodin by the anthrone oxygenase MYCFIDRAFT_34418. The functions of the other tailoring enzymes as well as the final product of the cluster have still to be identified. The sequence is that of Atrochrysone carboxyl ACP thioesterase MYCFIDRAFT_190111 from Pseudocercospora fijiensis (strain CIRAD86) (Black leaf streak disease fungus).